The sequence spans 230 residues: 3-isopropylmalate dehydratase small subunit (230 aa).

Belongs to the LeuD family. LeuD type 1 subfamily. In terms of assembly, heterodimer of LeuC and LeuD.

The enzyme catalyses (2R,3S)-3-isopropylmalate = (2S)-2-isopropylmalate. It functions in the pathway amino-acid biosynthesis; L-leucine biosynthesis; L-leucine from 3-methyl-2-oxobutanoate: step 2/4. Its function is as follows. Catalyzes the isomerization between 2-isopropylmalate and 3-isopropylmalate, via the formation of 2-isopropylmaleate. The protein is 3-isopropylmalate dehydratase small subunit of Bifidobacterium longum (strain DJO10A).